The chain runs to 248 residues: 4-hydroxy-tetrahydrodipicolinate reductase (248 aa).

Residues Asp-32, 74–76 (GTT), and 99–102 (SANF) each bind NAD(+). The active-site Proton donor/acceptor is the His-134. His-135 provides a ligand contact to (S)-2,3,4,5-tetrahydrodipicolinate. Lys-138 (proton donor) is an active-site residue. Position 144 to 145 (144 to 145 (GT)) interacts with (S)-2,3,4,5-tetrahydrodipicolinate.

This sequence belongs to the DapB family.

It is found in the cytoplasm. It carries out the reaction (S)-2,3,4,5-tetrahydrodipicolinate + NAD(+) + H2O = (2S,4S)-4-hydroxy-2,3,4,5-tetrahydrodipicolinate + NADH + H(+). The catalysed reaction is (S)-2,3,4,5-tetrahydrodipicolinate + NADP(+) + H2O = (2S,4S)-4-hydroxy-2,3,4,5-tetrahydrodipicolinate + NADPH + H(+). Its pathway is amino-acid biosynthesis; L-lysine biosynthesis via DAP pathway; (S)-tetrahydrodipicolinate from L-aspartate: step 4/4. Functionally, catalyzes the conversion of 4-hydroxy-tetrahydrodipicolinate (HTPA) to tetrahydrodipicolinate. This chain is 4-hydroxy-tetrahydrodipicolinate reductase, found in Chlorobium luteolum (strain DSM 273 / BCRC 81028 / 2530) (Pelodictyon luteolum).